Consider the following 636-residue polypeptide: Rik1-associated factor 2 (636 aa).

As to quaternary structure, component of the Clr4 methyltransferase complex (ClrC) composed of at least clr4, rik1, pcu4, rbx1, raf1 and raf2. The cullin pcu4, rik1, raf1, raf2 and the ring-box protein rbx1 are components of an E3 ubiquitin ligase, whose activity is essential for heterochromatin assembly. Interacts with pcu4.

The protein localises to the cytoplasm. The protein resides in the mitochondrion. It is found in the nucleus. It localises to the chromosome. Functionally, component of the Clr4 methyltransferase complex (ClrC) which contributes to the establishment of heterochromatin by specifically methylating histone H3 to form H3K9me. ClrC preferentially ubiquitylates H3K14 and ClrC-mediated H3 ubiquitination promotes clr4 methyltransferase activity for the methylation of H3K9. H3K9me represents a specific tag for epigenetic transcriptional repression by recruiting swi6/HP1 to methylated histones which leads to transcriptional silencing within centromeric heterochromatin, telomeric regions and at the silent mating-type loci. Has a role in both mitotic and meiotic chromosome segregation. This chain is Rik1-associated factor 2 (raf2), found in Schizosaccharomyces pombe (strain 972 / ATCC 24843) (Fission yeast).